The following is a 190-amino-acid chain: Elongation factor P-like protein (190 aa).

Belongs to the elongation factor P family.

The chain is Elongation factor P-like protein from Pectobacterium atrosepticum (strain SCRI 1043 / ATCC BAA-672) (Erwinia carotovora subsp. atroseptica).